A 38-amino-acid chain; its full sequence is Photosystem II reaction center protein L (38 aa).

A helical transmembrane segment spans residues 17–37 (SLYWGLLLIFVLAVLFSNYFF).

The protein belongs to the PsbL family. PSII is composed of 1 copy each of membrane proteins PsbA, PsbB, PsbC, PsbD, PsbE, PsbF, PsbH, PsbI, PsbJ, PsbK, PsbL, PsbM, PsbT, PsbX, PsbY, PsbZ, Psb30/Ycf12, at least 3 peripheral proteins of the oxygen-evolving complex and a large number of cofactors. It forms dimeric complexes.

Its subcellular location is the plastid. It is found in the chloroplast thylakoid membrane. One of the components of the core complex of photosystem II (PSII). PSII is a light-driven water:plastoquinone oxidoreductase that uses light energy to abstract electrons from H(2)O, generating O(2) and a proton gradient subsequently used for ATP formation. It consists of a core antenna complex that captures photons, and an electron transfer chain that converts photonic excitation into a charge separation. This subunit is found at the monomer-monomer interface and is required for correct PSII assembly and/or dimerization. The sequence is that of Photosystem II reaction center protein L from Ananas comosus (Pineapple).